The chain runs to 188 residues: dCTP deaminase (188 aa).

DCTP contacts are provided by residues 111–116, 135–137, Gln-156, Tyr-170, and Gln-180; these read KSTYAR and TLE. Glu-137 functions as the Proton donor/acceptor in the catalytic mechanism.

This sequence belongs to the dCTP deaminase family. Homotrimer.

It catalyses the reaction dCTP + H2O + H(+) = dUTP + NH4(+). The protein operates within pyrimidine metabolism; dUMP biosynthesis; dUMP from dCTP (dUTP route): step 1/2. Catalyzes the deamination of dCTP to dUTP. The protein is dCTP deaminase of Polaromonas sp. (strain JS666 / ATCC BAA-500).